The sequence spans 165 residues: Protein NKG7 (165 aa).

Helical transmembrane passes span 9–29 (LLTSSLGLVSLLVAVSTNFWF), 61–81 (FCILAVLWGLISTAFLVMSCI), 92–112 (IVSTFMGFAGALSLIVAMTVY), and 133–153 (FYLGWVSTLLFLCTGGLSLGA).

This sequence belongs to the PMP-22/EMP/MP20 family.

Its subcellular location is the cell membrane. The protein localises to the cytolytic granule membrane. Its function is as follows. Regulates cytotoxic granule exocytosis in effector lymphocytes, thus acting as a critical mediator of inflammation in a broad range of infectious and non-infectious diseases. Essential for cytotoxic degranulation of natural killer (NK) cells and CD8(+) T-cells and for the activation of CD4(+) T-cells following infection. Plays a critical role in CD8(+) T-cell and NK cell-mediated cytolysis of target cells and contributes to the cytolytic activity via the perforin/granzyme pathway by enhancing exocytosis of LAMP1-carrying lytic granules. Contributes to NK cell-mediated control of cancer metastasis. The polypeptide is Protein NKG7 (NKG7) (Bos taurus (Bovine)).